Reading from the N-terminus, the 622-residue chain is Golgin subfamily A member 6-like protein 7 (622 aa).

Disordered regions lie at residues 1–82 (MMSE…QQAL), 251–496 (RKHE…RKQV), and 511–580 (EKMQ…HDNR). Basic and acidic residues-rich tracts occupy residues 57 to 74 (SPEDKQQNRAQLKEENKA), 251 to 275 (RKHEEKMWRQEQRLRDQEKELREQE), 283 to 332 (EQMR…KQEE), 339 to 367 (EQMRKQEKQMLKQKEQMRKQEEQMWKQEE), 374 to 388 (EQMRKQEEQMWKQEE), and 395 to 420 (EQMRKQEEQMWKQEEQMGEQMRKQEE). The stretch at 100 to 534 (KTELETALHD…EKRREKKERM (435 aa)) forms a coiled coil. Residues 477–489 (QMGEQEEQMGEQE) are compositionally biased toward acidic residues. Basic and acidic residues-rich tracts occupy residues 511-546 (EKMQEEEEKIRRQVEKRREKKERMGEQEKTQEERCS) and 567-580 (PAREAGKGYSHDNR).

This sequence belongs to the GOLGA6 family.

This chain is Golgin subfamily A member 6-like protein 7, found in Homo sapiens (Human).